The following is a 219-amino-acid chain: dTTP/UTP pyrophosphatase (219 aa).

Asp79 functions as the Proton acceptor in the catalytic mechanism.

Belongs to the Maf family. YhdE subfamily. A divalent metal cation serves as cofactor.

The protein localises to the cytoplasm. The enzyme catalyses dTTP + H2O = dTMP + diphosphate + H(+). It catalyses the reaction UTP + H2O = UMP + diphosphate + H(+). Functionally, nucleoside triphosphate pyrophosphatase that hydrolyzes dTTP and UTP. May have a dual role in cell division arrest and in preventing the incorporation of modified nucleotides into cellular nucleic acids. This chain is dTTP/UTP pyrophosphatase, found in Oleidesulfovibrio alaskensis (strain ATCC BAA-1058 / DSM 17464 / G20) (Desulfovibrio alaskensis).